A 137-amino-acid chain; its full sequence is MADTMQFDLVSPERSLASLQARAVQIPGAEGDMTAMPLHAPTLTTLRPGILKVDAPEGTTEYLVTGGFAQITAEGLSVLAERAIPMDEMTRAHLDELIEEARTMYKTAQEDNSEHGLVEDAAKMLADMEALGTHMSL.

This sequence belongs to the ATPase epsilon chain family. In terms of assembly, F-type ATPases have 2 components, CF(1) - the catalytic core - and CF(0) - the membrane proton channel. CF(1) has five subunits: alpha(3), beta(3), gamma(1), delta(1), epsilon(1). CF(0) has three main subunits: a, b and c.

It is found in the cell inner membrane. Functionally, produces ATP from ADP in the presence of a proton gradient across the membrane. The protein is ATP synthase epsilon chain of Ruegeria sp. (strain TM1040) (Silicibacter sp.).